A 129-amino-acid polypeptide reads, in one-letter code: Glycine cleavage system H protein (129 aa).

Positions 24-106 (TYTVGITEHA…YADGWIFKIK (83 aa)) constitute a Lipoyl-binding domain. K65 carries the N6-lipoyllysine modification.

It belongs to the GcvH family. As to quaternary structure, the glycine cleavage system is composed of four proteins: P, T, L and H. (R)-lipoate serves as cofactor.

Its function is as follows. The glycine cleavage system catalyzes the degradation of glycine. The H protein shuttles the methylamine group of glycine from the P protein to the T protein. This Salmonella arizonae (strain ATCC BAA-731 / CDC346-86 / RSK2980) protein is Glycine cleavage system H protein.